Here is a 437-residue protein sequence, read N- to C-terminus: ATP-dependent RNA helicase RhlB (437 aa).

The Q motif signature appears at 9–37 (QKFADLGLEPTVLEGLDAQGFHYCTPIQA). Positions 40–219 (LPVVLTGQDI…FEHMNSPESV (180 aa)) constitute a Helicase ATP-binding domain. 53–60 (AQTGTGKT) lines the ATP pocket. A DEAD box motif is present at residues 165–168 (DEAD). Residues 245–390 (RLLQTLIEEE…LSKYNSEALL (146 aa)) form the Helicase C-terminal domain. Positions 395–437 (APLRLQRTPRQGGNRRPNGNRQGQGQSRPRNNNRRHPQSQKQQ) are disordered. Over residues 400–424 (QRTPRQGGNRRPNGNRQGQGQSRPR) the composition is skewed to low complexity. Basic residues predominate over residues 425–437 (NNNRRHPQSQKQQ).

Belongs to the DEAD box helicase family. RhlB subfamily. Component of the RNA degradosome, which is a multiprotein complex involved in RNA processing and mRNA degradation.

Its subcellular location is the cytoplasm. It catalyses the reaction ATP + H2O = ADP + phosphate + H(+). In terms of biological role, DEAD-box RNA helicase involved in RNA degradation. Has RNA-dependent ATPase activity and unwinds double-stranded RNA. The chain is ATP-dependent RNA helicase RhlB from Photobacterium profundum (strain SS9).